Consider the following 129-residue polypeptide: MKSVLFVCVGNGGKSQMAAALAQKYASDSVEIHSAGTKPAQGLNQLSVESIAEVGADMSQGIPKAIDPELLRTVDRVVILGDDAQVDMPESAQGALERWSIEEPDAQGMERMRIVRDQIDNRVQALLAG.

Belongs to the low molecular weight phosphotyrosine protein phosphatase family.

It localises to the cytoplasm. It carries out the reaction mycothiol + arsenate = arseno-mycothiol + H2O. Involved in defense against toxic arsenate. Involved in the mycothiol/myoredoxin redox pathway which uses a mycothioltransferase mechanism; facilitates adduct formation between arsenate and mycothiol. In Corynebacterium glutamicum (strain ATCC 13032 / K051), this protein is Arsenate-mycothiol transferase ArsC2 (arsC2).